Reading from the N-terminus, the 191-residue chain is Orotate phosphoribosyltransferase (191 aa).

Residue 114 to 122 coordinates 5-phospho-alpha-D-ribose 1-diphosphate; it reads EDVVTTGKS. Residues T118 and R146 each coordinate orotate.

Belongs to the purine/pyrimidine phosphoribosyltransferase family. PyrE subfamily. In terms of assembly, homodimer. It depends on Mg(2+) as a cofactor.

It carries out the reaction orotidine 5'-phosphate + diphosphate = orotate + 5-phospho-alpha-D-ribose 1-diphosphate. It functions in the pathway pyrimidine metabolism; UMP biosynthesis via de novo pathway; UMP from orotate: step 1/2. In terms of biological role, catalyzes the transfer of a ribosyl phosphate group from 5-phosphoribose 1-diphosphate to orotate, leading to the formation of orotidine monophosphate (OMP). This is Orotate phosphoribosyltransferase from Clostridium botulinum (strain Kyoto / Type A2).